We begin with the raw amino-acid sequence, 241 residues long: Uridylate kinase (241 aa).

12–15 (KISG) lines the ATP pocket. Positions 20–25 (GDKGNG) are involved in allosteric activation by GTP. Residue glycine 54 participates in UMP binding. Positions 55 and 59 each coordinate ATP. UMP is bound by residues aspartate 74 and 135–142 (TGNPYFST). ATP contacts are provided by asparagine 163, tyrosine 169, and aspartate 172.

This sequence belongs to the UMP kinase family. Homohexamer.

It is found in the cytoplasm. The catalysed reaction is UMP + ATP = UDP + ADP. It participates in pyrimidine metabolism; CTP biosynthesis via de novo pathway; UDP from UMP (UMPK route): step 1/1. With respect to regulation, allosterically activated by GTP. Inhibited by UTP. In terms of biological role, catalyzes the reversible phosphorylation of UMP to UDP. The polypeptide is Uridylate kinase (Lactobacillus helveticus (strain DPC 4571)).